The sequence spans 386 residues: DNA dC-&gt;dU-editing enzyme APOBEC-3D (386 aa).

CMP/dCMP-type deaminase domains follow at residues Gly-29–Trp-145 and Asp-187–Leu-334. 4 residues coordinate Zn(2+): His-78, Cys-109, Cys-112, and His-262. Glu-264 functions as the Proton donor in the catalytic mechanism. Zn(2+) contacts are provided by Cys-293 and Cys-296.

The protein belongs to the cytidine and deoxycytidylate deaminase family. In terms of assembly, can form homo- and heterodimers with APOBEC3F and APOBEC3G. Interacts with L1RE1; this interaction inhibits LINE-1 retrotransposition. As to quaternary structure, (Microbial infection) Interacts with HIV-1 Vif. This interaction triggers APOBEC3D polyubiquitylation and degradation by the 26S proteasome. Zn(2+) serves as cofactor. As to expression, expressed in lymphoid organs. Also detected in non-lymphoid tissues including lung.

Its subcellular location is the cytoplasm. It localises to the P-body. The enzyme catalyses a 2'-deoxycytidine in single-stranded DNA + H2O + H(+) = a 2'-deoxyuridine in single-stranded DNA + NH4(+). With respect to regulation, (Microbial infection) Antiviral activity is neutralized by the HIV-1 virion infectivity factor (Vif), that prevents its incorporation into progeny virions by both inhibiting its translation and/or by inducing its ubiquitination and subsequent degradation by the 26S proteasome. DNA deaminase (cytidine deaminase) which acts as an inhibitor of retrovirus replication and retrotransposon mobility via deaminase-dependent and -independent mechanisms. Exhibits antiviral activity against HIV-1. After the penetration of retroviral nucleocapsids into target cells of infection and the initiation of reverse transcription, it can induce the conversion of cytosine to uracil in the minus-sense single-strand viral DNA, leading to G-to-A hypermutations in the subsequent plus-strand viral DNA. The resultant detrimental levels of mutations in the proviral genome, along with a deamination-independent mechanism that works prior to the proviral integration, together exert efficient antiretroviral effects in infected target cells. Selectively targets single-stranded DNA and does not deaminate double-stranded DNA or single- or double-stranded RNA. Also inhibits the mobility of LTR and non-LTR retrotransposons. Functionally, (Microbial infection) Enhances hepatitis B virus/HBV replication by excluding restriction factors APOBEC3F and APOBEC3G from HBV capsids. The polypeptide is DNA dC-&gt;dU-editing enzyme APOBEC-3D (Homo sapiens (Human)).